The primary structure comprises 496 residues: Lysine--tRNA ligase (496 aa).

Mg(2+) is bound by residues Glu409 and Glu416.

It belongs to the class-II aminoacyl-tRNA synthetase family. As to quaternary structure, homodimer. Mg(2+) serves as cofactor.

The protein localises to the cytoplasm. It carries out the reaction tRNA(Lys) + L-lysine + ATP = L-lysyl-tRNA(Lys) + AMP + diphosphate. The sequence is that of Lysine--tRNA ligase from Streptococcus pneumoniae serotype 19F (strain G54).